The primary structure comprises 149 residues: Large ribosomal subunit protein uL22c (149 aa).

It belongs to the universal ribosomal protein uL22 family. Part of the 50S ribosomal subunit.

The protein resides in the plastid. It localises to the chloroplast. This protein binds specifically to 23S rRNA. In terms of biological role, the globular domain of the protein is located near the polypeptide exit tunnel on the outside of the subunit, while an extended beta-hairpin is found that lines the wall of the exit tunnel in the center of the 70S ribosome. The protein is Large ribosomal subunit protein uL22c (rpl22) of Brachypodium distachyon (Purple false brome).